The primary structure comprises 296 residues: 4-hydroxybenzoate octaprenyltransferase (296 aa).

8 helical membrane passes run 23 to 43 (IGIL…SPGW), 46 to 66 (GLVL…GCVM), 99 to 119 (LALA…PLVV), 141 to 161 (IPQA…FAAI), 163 to 183 (GQLP…AIAY), 211 to 231 (DVFA…WVGV), 237 to 257 (WPYF…YALI), and 265 to 285 (CFKA…GVLA).

It belongs to the UbiA prenyltransferase family. Mg(2+) is required as a cofactor.

Its subcellular location is the cell inner membrane. The enzyme catalyses all-trans-octaprenyl diphosphate + 4-hydroxybenzoate = 4-hydroxy-3-(all-trans-octaprenyl)benzoate + diphosphate. It participates in cofactor biosynthesis; ubiquinone biosynthesis. Catalyzes the prenylation of para-hydroxybenzoate (PHB) with an all-trans polyprenyl group. Mediates the second step in the final reaction sequence of ubiquinone-8 (UQ-8) biosynthesis, which is the condensation of the polyisoprenoid side chain with PHB, generating the first membrane-bound Q intermediate 3-octaprenyl-4-hydroxybenzoate. In Methylobacillus flagellatus (strain ATCC 51484 / DSM 6875 / VKM B-1610 / KT), this protein is 4-hydroxybenzoate octaprenyltransferase.